Here is a 196-residue protein sequence, read N- to C-terminus: Glycerol-3-phosphate acyltransferase (196 aa).

6 helical membrane-spanning segments follow: residues 5–25 (VYLLIVFAYLLGSVSSAIIFC), 53–73 (FSALGVLLFDILKGGLPVLLA), 80–100 (PSEIGLIALAACLGHIFPLFF), 107–127 (GVATAFGALLSISFAASAAGL), 130–150 (WLIVFLLFGYSSLSAVITALI), and 153–173 (FYIWWFLPEFTFPVALVCCLL).

It belongs to the PlsY family. In terms of assembly, probably interacts with PlsX.

The protein resides in the cell inner membrane. It carries out the reaction an acyl phosphate + sn-glycerol 3-phosphate = a 1-acyl-sn-glycero-3-phosphate + phosphate. The protein operates within lipid metabolism; phospholipid metabolism. Catalyzes the transfer of an acyl group from acyl-phosphate (acyl-PO(4)) to glycerol-3-phosphate (G3P) to form lysophosphatidic acid (LPA). This enzyme utilizes acyl-phosphate as fatty acyl donor, but not acyl-CoA or acyl-ACP. The polypeptide is Glycerol-3-phosphate acyltransferase (Actinobacillus pleuropneumoniae serotype 7 (strain AP76)).